The chain runs to 331 residues: 6-phosphogluconolactonase (331 aa).

N6-acetyllysine is present on lysine 287.

Belongs to the cycloisomerase 2 family.

It carries out the reaction 6-phospho-D-glucono-1,5-lactone + H2O = 6-phospho-D-gluconate + H(+). The protein operates within carbohydrate degradation; pentose phosphate pathway; D-ribulose 5-phosphate from D-glucose 6-phosphate (oxidative stage): step 2/3. Functionally, catalyzes the hydrolysis of 6-phosphogluconolactone to 6-phosphogluconate. The polypeptide is 6-phosphogluconolactonase (Escherichia coli O127:H6 (strain E2348/69 / EPEC)).